We begin with the raw amino-acid sequence, 490 residues long: Ketol-acid reductoisomerase (NADP(+)) (490 aa).

The KARI N-terminal Rossmann domain occupies 18-208 (AKCRFMDSSE…GGHKAGVLMS (191 aa)). Residues 45–48 (CGAQ), Arg68, Arg76, Ser78, and 108–110 (DKQ) each bind NADP(+). The active site involves His132. Residue Gly158 coordinates NADP(+). 2 KARI C-terminal knotted domains span residues 209-344 (SFIA…KTPA) and 345-486 (GDVE…MADM). The Mg(2+) site is built by Asp217, Glu221, Glu389, and Glu393. Residue Ser414 participates in substrate binding.

The protein belongs to the ketol-acid reductoisomerase family. Mg(2+) is required as a cofactor.

It catalyses the reaction (2R)-2,3-dihydroxy-3-methylbutanoate + NADP(+) = (2S)-2-acetolactate + NADPH + H(+). The enzyme catalyses (2R,3R)-2,3-dihydroxy-3-methylpentanoate + NADP(+) = (S)-2-ethyl-2-hydroxy-3-oxobutanoate + NADPH + H(+). It functions in the pathway amino-acid biosynthesis; L-isoleucine biosynthesis; L-isoleucine from 2-oxobutanoate: step 2/4. Its pathway is amino-acid biosynthesis; L-valine biosynthesis; L-valine from pyruvate: step 2/4. In terms of biological role, involved in the biosynthesis of branched-chain amino acids (BCAA). Catalyzes an alkyl-migration followed by a ketol-acid reduction of (S)-2-acetolactate (S2AL) to yield (R)-2,3-dihydroxy-isovalerate. In the isomerase reaction, S2AL is rearranged via a Mg-dependent methyl migration to produce 3-hydroxy-3-methyl-2-ketobutyrate (HMKB). In the reductase reaction, this 2-ketoacid undergoes a metal-dependent reduction by NADPH to yield (R)-2,3-dihydroxy-isovalerate. The sequence is that of Ketol-acid reductoisomerase (NADP(+)) from Marinomonas sp. (strain MWYL1).